Here is a 138-residue protein sequence, read N- to C-terminus: Putative pre-16S rRNA nuclease (138 aa).

The protein belongs to the YqgF nuclease family.

The protein resides in the cytoplasm. Functionally, could be a nuclease involved in processing of the 5'-end of pre-16S rRNA. This is Putative pre-16S rRNA nuclease from Haemophilus ducreyi (strain 35000HP / ATCC 700724).